The primary structure comprises 97 residues: Nucleoid-associated protein HPAG1_0033 (97 aa).

It belongs to the YbaB/EbfC family. In terms of assembly, homodimer.

It localises to the cytoplasm. Its subcellular location is the nucleoid. In terms of biological role, binds to DNA and alters its conformation. May be involved in regulation of gene expression, nucleoid organization and DNA protection. The protein is Nucleoid-associated protein HPAG1_0033 of Helicobacter pylori (strain HPAG1).